The following is a 365-amino-acid chain: Beta-parvin (365 aa).

The span at 1–12 shows a compositional bias: pro residues; the sequence is MSSAPPRSPTPR. The segment at 1–52 is disordered; the sequence is MSSAPPRSPTPRAPKMKKDESFLGKLGGTLARKKKTREVTDLQEEGKSAINS. A Phosphoserine modification is found at serine 8. Basic and acidic residues predominate over residues 37 to 47; that stretch reads REVTDLQEEGK. Calponin-homology (CH) domains lie at 88–195 and 255–362; these read KELV…MHFR and NLVK…TKYK.

It belongs to the parvin family. In terms of assembly, interacts with ILK, ARHGEF6, PXN (via LD motifs), ACTN2 and actin. Interacts with DYSF. Phosphorylated by ILK. In terms of tissue distribution, expressed predominantly in heart and moderately in spleen, lung and skeletal muscle.

Its subcellular location is the cell junction. The protein resides in the focal adhesion. It is found in the cell membrane. The protein localises to the cytoplasm. It localises to the cytoskeleton. Its subcellular location is the cell projection. The protein resides in the lamellipodium. It is found in the myofibril. The protein localises to the sarcomere. It localises to the z line. In terms of biological role, adapter protein that plays a role in integrin signaling via ILK and in activation of the GTPases CDC42 and RAC1 by guanine exchange factors, such as ARHGEF6. Is involved in the reorganization of the actin cytoskeleton and formation of lamellipodia. Plays a role in cell adhesion, cell spreading, establishment or maintenance of cell polarity, and cell migration. In Mus musculus (Mouse), this protein is Beta-parvin (Parvb).